A 175-amino-acid chain; its full sequence is Ribosome maturation factor RimM (175 aa).

The region spanning 99 to 171 is the PRC barrel domain; that stretch reads AGEYYWFQLK…RILFDLPDGL (73 aa).

This sequence belongs to the RimM family. In terms of assembly, binds ribosomal protein uS19.

The protein resides in the cytoplasm. An accessory protein needed during the final step in the assembly of 30S ribosomal subunit, possibly for assembly of the head region. Essential for efficient processing of 16S rRNA. May be needed both before and after RbfA during the maturation of 16S rRNA. It has affinity for free ribosomal 30S subunits but not for 70S ribosomes. The protein is Ribosome maturation factor RimM of Syntrophotalea carbinolica (strain DSM 2380 / NBRC 103641 / GraBd1) (Pelobacter carbinolicus).